The primary structure comprises 104 residues: L-rhamnose mutarotase (104 aa).

Position 18 (Y18) interacts with substrate. H22 serves as the catalytic Proton donor. Residues Y41 and 76-77 (WW) contribute to the substrate site.

Belongs to the rhamnose mutarotase family. As to quaternary structure, homodimer.

It localises to the cytoplasm. It catalyses the reaction alpha-L-rhamnose = beta-L-rhamnose. It functions in the pathway carbohydrate metabolism; L-rhamnose metabolism. Its function is as follows. Involved in the anomeric conversion of L-rhamnose. The chain is L-rhamnose mutarotase from Escherichia coli O8 (strain IAI1).